We begin with the raw amino-acid sequence, 215 residues long: Disulfide-bond oxidoreductase YfcG (215 aa).

Positions 1-87 (MIDLYFAPTP…YLAEKTGLFL (87 aa)) constitute a GST N-terminal domain. Glutathione is bound by residues N11, Q38, R40, I52, 71–72 (ES), and R132. The 126-residue stretch at 90–215 (ETRERAATLQ…AQLGDERSDS (126 aa)) folds into the GST C-terminal domain.

It belongs to the GST superfamily. Nu-class GSH transferase family. As to quaternary structure, homodimer.

In terms of biological role, exhibits a very robust glutathione (GSH)-dependent disulfide-bond reductase activity toward the model substrate, 2-hydroxyethyl disulfide; the actual physiological substrates are not known. Also has a low GSH-dependent hydroperoxidase activity toward cumene hydroperoxide, but does not reduce H(2)O(2), tert-butyl hydroperoxide, benzyl peroxide, or lauroyl peroxide. Exhibits little or no GSH transferase activity with most typical electrophilic substrates, and has no detectable transferase activity using glutathionylspermidine (GspSH) as the nucleophilic substrate. Is involved in defense against oxidative stress, probably via its peroxidase activity. This chain is Disulfide-bond oxidoreductase YfcG (yfcG), found in Escherichia coli (strain K12).